A 50-amino-acid polypeptide reads, in one-letter code: Thrombin-like enzyme BpirSP27 (50 aa).

The region spanning 1-50 (VVGGDECNINEHRSLVAIFNSTGFFCSGILLNQEWVLTASHCDSTNFQMK) is the Peptidase S1 domain. An N-linked (GlcNAc...) asparagine glycan is attached at N20. A disulfide bridge connects residues C26 and C42. The active-site Charge relay system is the H41.

The protein belongs to the peptidase S1 family. Snake venom subfamily. As to quaternary structure, monomer. Post-translationally, N-glycosylated. In terms of tissue distribution, expressed by the venom gland.

The protein localises to the secreted. Inhibited by serine protease inhibitors PMSF, benzamidine, leupeptin and aprotinin, as well as by copper (Cu2+) and manganese (Mn2+) ions. Not inhibited by metalloprotease inhibitors EDTA, EGTA and 1,10-phenanthroline, as well as by barium (Ba2+) and calcium ion (Ca2+). Snake venom serine protease that interferes with the hemostatic system of the prey. It preferentially degrades the Bbeta chain (FGB) of fibrinogen, with minor effects on the Aalpha chain (FGA). It presents a lower ability to degrade fibrin clots than BpirSP41. It hydrolyzes chromogenic substrates S-2238 (used for testing thrombin activity), S-2222 (factor Xa), S-2266 (glandular kallikrein and factor XIa), S-2302 (plasma kallikrein, factor XIa and XIIa), and S-2251 (plasmin). It shows a decrease in the clotting time of human plasma in the presence of increasing doses of the enzyme. Its minimum coagulant dose (MCD) is 3.5 ug. It also promotes platelet aggregation in a concentration-dependent manner in the presence or absence of calcium. It also shows 20% inhibition of the hemolytic activity promoted by the complement pathways and possess only a minor role in the induction of edema and pain in rat. The sequence is that of Thrombin-like enzyme BpirSP27 from Bothrops pirajai (Piraja's lancehead).